The chain runs to 313 residues: Aspartate carbamoyltransferase catalytic subunit (313 aa).

Carbamoyl phosphate-binding residues include R58 and T59. Position 86 (K86) interacts with L-aspartate. Carbamoyl phosphate-binding residues include R108, H136, and Q139. R169 and R224 together coordinate L-aspartate. Positions 265 and 266 each coordinate carbamoyl phosphate.

It belongs to the aspartate/ornithine carbamoyltransferase superfamily. ATCase family. In terms of assembly, heterododecamer (2C3:3R2) of six catalytic PyrB chains organized as two trimers (C3), and six regulatory PyrI chains organized as three dimers (R2).

It carries out the reaction carbamoyl phosphate + L-aspartate = N-carbamoyl-L-aspartate + phosphate + H(+). It functions in the pathway pyrimidine metabolism; UMP biosynthesis via de novo pathway; (S)-dihydroorotate from bicarbonate: step 2/3. Catalyzes the condensation of carbamoyl phosphate and aspartate to form carbamoyl aspartate and inorganic phosphate, the committed step in the de novo pyrimidine nucleotide biosynthesis pathway. The protein is Aspartate carbamoyltransferase catalytic subunit of Natranaerobius thermophilus (strain ATCC BAA-1301 / DSM 18059 / JW/NM-WN-LF).